The following is a 135-amino-acid chain: DNA-directed RNA polymerase subunit omega (135 aa).

The interval 84-106 (IAGHSSHVSPSRSSRHTGLGKSF) is disordered.

The protein belongs to the RNA polymerase subunit omega family. The RNAP catalytic core consists of 2 alpha, 1 beta, 1 beta' and 1 omega subunit. When a sigma factor is associated with the core the holoenzyme is formed, which can initiate transcription.

It catalyses the reaction RNA(n) + a ribonucleoside 5'-triphosphate = RNA(n+1) + diphosphate. Functionally, promotes RNA polymerase assembly. Latches the N- and C-terminal regions of the beta' subunit thereby facilitating its interaction with the beta and alpha subunits. The protein is DNA-directed RNA polymerase subunit omega of Anaplasma phagocytophilum (strain HZ).